Consider the following 504-residue polypeptide: Cytochrome P450 71B7 (504 aa).

A helical membrane pass occupies residues 1–21; that stretch reads MSILLCFLCLLPVFLVSLSIL. A Glycyl lysine isopeptide (Lys-Gly) (interchain with G-Cter in ubiquitin) cross-link involves residue lysine 82. Residue cysteine 446 participates in heme binding.

It belongs to the cytochrome P450 family. It depends on heme as a cofactor. Highly expressed in rosette leaves. Also expressed in roots, leaves, flowers, and siliques.

It is found in the membrane. The chain is Cytochrome P450 71B7 (CYP71B7) from Arabidopsis thaliana (Mouse-ear cress).